We begin with the raw amino-acid sequence, 1193 residues long: Laminin subunit gamma-2 (1193 aa).

The first 21 residues, 1-21 (MPALWLGCCLCFSLLLPAARA), serve as a signal peptide directing secretion. Intrachain disulfides connect cysteine 28–cysteine 37, cysteine 30–cysteine 53, cysteine 56–cysteine 65, cysteine 68–cysteine 81, cysteine 84–cysteine 96, cysteine 86–cysteine 102, cysteine 104–cysteine 113, cysteine 116–cysteine 128, cysteine 139–cysteine 150, cysteine 141–cysteine 155, cysteine 157–cysteine 166, and cysteine 169–cysteine 184. Laminin EGF-like domains follow at residues 28–83 (CDCN…RCLP), 84–130 (CNCN…GCTQ), and 139–186 (CDCD…GCTQ). Positions 187–196 (CFCYGHSASC) constitute a Laminin EGF-like 4; first part domain. One can recognise a Laminin IV type A domain in the interval 213–381 (QDVDGWKAVQ…SGAPAPWVEQ (169 aa)). Residues asparagine 342 and asparagine 362 are each glycosylated (N-linked (GlcNAc...) asparagine). The Laminin EGF-like 4; second part domain maps to 382-415 (CICPVGYKGQFCQDCASGYKRDSARLGPFGTCIP). Laminin EGF-like domains are found at residues 416 to 461 (CNCQ…SCKP), 462 to 516 (CPCH…PCQP), and 517 to 572 (CQCN…KCRA). Disulfide bonds link cysteine 462-cysteine 470, cysteine 464-cysteine 481, cysteine 484-cysteine 493, cysteine 496-cysteine 514, cysteine 517-cysteine 531, cysteine 519-cysteine 538, cysteine 541-cysteine 550, cysteine 553-cysteine 570, cysteine 573-cysteine 585, cysteine 575-cysteine 591, and cysteine 593-cysteine 602. The region spanning 573–602 (CNCNPMGSEPVGCRSDGTCVCKPGFGGPNC) is the Laminin EGF-like 8; truncated domain. The tract at residues 603–1193 (EHGAFSCPAC…CYNTQALEQQ (591 aa)) is domain II and I. A coiled-coil region spans residues 611–718 (ACYNQVKIQM…GSQYQNRVRD (108 aa)). O-linked (Xyl...) (chondroitin sulfate) serine glycans are attached at residues serine 803 and serine 805. 2 coiled-coil regions span residues 811–1076 (AVVQ…AVQM) and 1117–1193 (EEGL…LEQQ). N-linked (GlcNAc...) asparagine glycosylation is found at asparagine 942 and asparagine 1033.

Laminin is a complex glycoprotein, consisting of three different polypeptide chains (alpha, beta, gamma), which are bound to each other by disulfide bonds into a cross-shaped molecule comprising one long and three short arms with globules at each end. Gamma-2 is a subunit of laminin-5 (laminin-332 or epiligrin/kalinin/nicein). O-glycosylated; contains chondroitin sulfate (CS). CS attachment is on either Ser-803 or Ser-805. As to expression, the large variant is expressed only in specific epithelial cells of embryonic and neonatal tissues. In 17-week old embryo the small variant is found in cerebral cortex, lung, and distal tubes of kidney, but not in epithelia except for distal tubuli.

It is found in the secreted. Its subcellular location is the extracellular space. The protein localises to the extracellular matrix. The protein resides in the basement membrane. Binding to cells via a high affinity receptor, laminin is thought to mediate the attachment, migration and organization of cells into tissues during embryonic development by interacting with other extracellular matrix components. Ladsin exerts cell-scattering activity toward a wide variety of cells, including epithelial, endothelial, and fibroblastic cells. The sequence is that of Laminin subunit gamma-2 (LAMC2) from Homo sapiens (Human).